A 338-amino-acid polypeptide reads, in one-letter code: Gibberellin 2-beta-dioxygenase 8 (338 aa).

The Fe2OG dioxygenase domain occupies 191-290 (NTCYLRMNRY…RFSTAYFMCP (100 aa)). His215, Asp217, and His271 together coordinate Fe cation. Residue Arg281 is part of the active site. A 2-oxoglutarate-binding site is contributed by Arg281.

This sequence belongs to the iron/ascorbate-dependent oxidoreductase family. GA2OX subfamily. It depends on Fe(2+) as a cofactor.

The catalysed reaction is gibberellin A1 + 2-oxoglutarate + O2 = gibberellin A8 + succinate + CO2. Its pathway is plant hormone biosynthesis; gibberellin biosynthesis. Functionally, catalyzes the 2-beta-hydroxylation of gibberellins (GA) precursors, rendering them unable to be converted to active GAs. Hydroxylates the C20-GA GA12 and GA53, but is not active on C19-GAs, like GA1, GA4, GA9 and GA20. This is Gibberellin 2-beta-dioxygenase 8 (GA2OX8) from Arabidopsis thaliana (Mouse-ear cress).